Consider the following 528-residue polypeptide: NAC domain-containing protein 13 (528 aa).

Residues 10 to 160 (LAPGFRFHPT…AYVLYKIYKK (151 aa)) enclose the NAC domain. Residues 107–166 (VGEKKTLVFHRGRAPNGERTNWVMHEYTLHKEELKRCGGEDVKDAYVLYKIYKKSGSGPK) mediate DNA binding. Residues 388–419 (EAPGTGDSSEFLNPVPSGISTTNEDDPSKDES) are disordered. The chain crosses the membrane as a helical span at residues 499–519 (FFCLSIIGALCALFWVIIGTM).

Interacts with RCD1. In terms of tissue distribution, expressed in roots, rosette leaves, shoot apex, stems and flowers.

It localises to the endoplasmic reticulum membrane. The protein resides in the nucleus. Its function is as follows. Transcriptional activator activated by proteolytic cleavage through regulated intramembrane proteolysis (RIP). Involved in oxidative stress tolerance by mediating regulation of mitochondrial retrograde signaling during mitochondrial dysfunction. Interacts directly with the mitochondrial dysfunction DNA consensus motif 5'-CTTGNNNNNCA[AC]G-3', a cis-regulatory elements of several mitochondrial retrograde regulation-induced genes, and triggers increased oxidative stress tolerance. The polypeptide is NAC domain-containing protein 13 (Arabidopsis thaliana (Mouse-ear cress)).